A 447-amino-acid polypeptide reads, in one-letter code: uncharacterized protein (447 aa).

The segment at 39–76 is disordered; the sequence is PQAAPYTRNNGMGECRRGHRQGHRAEVHDNRPADKVGQ. Residues 61 to 72 are compositionally biased toward basic and acidic residues; that stretch reads HRAEVHDNRPAD.

Belongs to the 3-oxoacid CoA-transferase subunit A family.

This is an uncharacterized protein from Archaeoglobus fulgidus (strain ATCC 49558 / DSM 4304 / JCM 9628 / NBRC 100126 / VC-16).